The chain runs to 328 residues: Malate dehydrogenase (328 aa).

Position 11-17 (G11–G17) interacts with NAD(+). Residues R94 and R100 each coordinate substrate. NAD(+) is bound by residues N107, Q114, and V131–N133. 2 residues coordinate substrate: N133 and R164. The active-site Proton acceptor is H189.

Belongs to the LDH/MDH superfamily. MDH type 2 family.

It carries out the reaction (S)-malate + NAD(+) = oxaloacetate + NADH + H(+). Catalyzes the reversible oxidation of malate to oxaloacetate. This chain is Malate dehydrogenase, found in Stenotrophomonas maltophilia (strain K279a).